Reading from the N-terminus, the 139-residue chain is Small ribosomal subunit protein uS12 (139 aa).

Residues 1–21 (MSTVSQLIKKRRSSKTSKTKA) form a disordered region. The span at 8-18 (IKKRRSSKTSK) shows a compositional bias: basic residues. Asp-102 carries the 3-methylthioaspartic acid modification.

It belongs to the universal ribosomal protein uS12 family. Part of the 30S ribosomal subunit. Contacts proteins S8 and S17. May interact with IF1 in the 30S initiation complex.

Functionally, with S4 and S5 plays an important role in translational accuracy. Its function is as follows. Interacts with and stabilizes bases of the 16S rRNA that are involved in tRNA selection in the A site and with the mRNA backbone. Located at the interface of the 30S and 50S subunits, it traverses the body of the 30S subunit contacting proteins on the other side and probably holding the rRNA structure together. The combined cluster of proteins S8, S12 and S17 appears to hold together the shoulder and platform of the 30S subunit. The polypeptide is Small ribosomal subunit protein uS12 (Aster yellows witches'-broom phytoplasma (strain AYWB)).